Here is a 261-residue protein sequence, read N- to C-terminus: Cytochrome c oxidase subunit 3 (261 aa).

Topologically, residues 1 to 15 are mitochondrial matrix; the sequence is MAHQAHAYHMVDPSP. A helical transmembrane segment spans residues 16-34; it reads WPLTGAVAALLMTSGLAVW. Over 35–40 the chain is Mitochondrial intermembrane; it reads FHFHSM. A helical transmembrane segment spans residues 41 to 66; the sequence is YLLYLGLTLLLLTMVQWWRDIIREGT. At 67-72 the chain is on the mitochondrial matrix side; sequence FQGHHT. The helical transmembrane segment at 73-105 threads the bilayer; the sequence is PPVQKGLRYGMILFITSEVFFFLGFFWAFYHSS. Residues 106 to 128 are Mitochondrial intermembrane-facing; sequence LAPTPELGGCWPPTGIYPLDPFE. A helical membrane pass occupies residues 129–152; sequence VPLLNTAVLLASGVTVTWAHHSLM. Residues 153-155 are Mitochondrial matrix-facing; it reads EGN. Residues 156 to 183 traverse the membrane as a helical segment; that stretch reads RKEAIQALTLTVLLGFYFTALQAMEYYE. Topologically, residues 184-190 are mitochondrial intermembrane; sequence APFTIAD. A helical membrane pass occupies residues 191–223; that stretch reads GVYGSTFFVATGFHGLHVIIGSTFLMVCLLRQI. Over 224–232 the chain is Mitochondrial matrix; the sequence is QYHFTSEHH. Residues 233-256 traverse the membrane as a helical segment; sequence FGFERAAWYWHFVDVVWLFLYVSI. The Mitochondrial intermembrane segment spans residues 257 to 261; the sequence is YWWGS.

Belongs to the cytochrome c oxidase subunit 3 family. Component of the cytochrome c oxidase (complex IV, CIV), a multisubunit enzyme composed of 14 subunits. The complex is composed of a catalytic core of 3 subunits MT-CO1, MT-CO2 and MT-CO3, encoded in the mitochondrial DNA, and 11 supernumerary subunits COX4I, COX5A, COX5B, COX6A, COX6B, COX6C, COX7A, COX7B, COX7C, COX8 and NDUFA4, which are encoded in the nuclear genome. The complex exists as a monomer or a dimer and forms supercomplexes (SCs) in the inner mitochondrial membrane with NADH-ubiquinone oxidoreductase (complex I, CI) and ubiquinol-cytochrome c oxidoreductase (cytochrome b-c1 complex, complex III, CIII), resulting in different assemblies (supercomplex SCI(1)III(2)IV(1) and megacomplex MCI(2)III(2)IV(2)).

The protein localises to the mitochondrion inner membrane. The enzyme catalyses 4 Fe(II)-[cytochrome c] + O2 + 8 H(+)(in) = 4 Fe(III)-[cytochrome c] + 2 H2O + 4 H(+)(out). Its function is as follows. Component of the cytochrome c oxidase, the last enzyme in the mitochondrial electron transport chain which drives oxidative phosphorylation. The respiratory chain contains 3 multisubunit complexes succinate dehydrogenase (complex II, CII), ubiquinol-cytochrome c oxidoreductase (cytochrome b-c1 complex, complex III, CIII) and cytochrome c oxidase (complex IV, CIV), that cooperate to transfer electrons derived from NADH and succinate to molecular oxygen, creating an electrochemical gradient over the inner membrane that drives transmembrane transport and the ATP synthase. Cytochrome c oxidase is the component of the respiratory chain that catalyzes the reduction of oxygen to water. Electrons originating from reduced cytochrome c in the intermembrane space (IMS) are transferred via the dinuclear copper A center (CU(A)) of subunit 2 and heme A of subunit 1 to the active site in subunit 1, a binuclear center (BNC) formed by heme A3 and copper B (CU(B)). The BNC reduces molecular oxygen to 2 water molecules using 4 electrons from cytochrome c in the IMS and 4 protons from the mitochondrial matrix. The chain is Cytochrome c oxidase subunit 3 (MT-CO3) from Squalus acanthias (Spiny dogfish).